The primary structure comprises 489 residues: Membrane-bound acylglycerophosphatidylinositol O-acyltransferase frj (489 aa).

3 consecutive transmembrane segments (helical) span residues 2-22 (SIDD…GSYV), 40-60 (VLVV…SLAL), and 75-95 (LVTF…DFYF). Active-site residues include asparagine 331 and histidine 364. 2 helical membrane-spanning segments follow: residues 405–425 (VIFW…FLLS) and 433–453 (FYSS…ALGF).

The protein belongs to the membrane-bound acyltransferase family.

It is found in the membrane. The catalysed reaction is a 1-acyl-sn-glycero-3-phospho-(1D-myo-inositol) + (5Z,8Z,11Z,14Z)-eicosatetraenoyl-CoA = a 1-acyl-2-(5Z,8Z,11Z,14Z-eicosatetraenoyl)-sn-glycero-3-phospho-(1D-myo-inositol) + CoA. It catalyses the reaction a 1-acyl-sn-glycero-3-phosphocholine + an acyl-CoA = a 1,2-diacyl-sn-glycero-3-phosphocholine + CoA. It carries out the reaction (9Z)-hexadecenoyl-CoA + 1-hexadecanoyl-sn-glycero-3-phosphocholine = 1-hexadecanoyl-2-(9Z-hexadecenoyl)-sn-glycero-3-phosphocholine + CoA. The enzyme catalyses a 1-acyl-sn-glycero-3-phospho-L-serine + an acyl-CoA = a 1,2-diacyl-sn-glycero-3-phospho-L-serine + CoA. The catalysed reaction is 1-(9Z-octadecenoyl)-sn-glycero-3-phospho-L-serine + (9Z)-hexadecenoyl-CoA = 1-(9Z-octadecenoyl)-2-(9Z-hexadecenoyl)-sn-glycero-3-phospho-L-serine + CoA. It catalyses the reaction a 1-acyl-sn-glycero-3-phosphoethanolamine + an acyl-CoA = a 1,2-diacyl-sn-glycero-3-phosphoethanolamine + CoA. It carries out the reaction 1-hexadecanoyl-sn-glycero-3-phosphoethanolamine + (9Z)-hexadecenoyl-CoA = 1-hexadecanoyl-2-(9Z)-hexadecenoyl-sn-glycero-3-phosphoethanolamine + CoA. The protein operates within lipid metabolism; phospholipid metabolism. Functionally, acyltransferase that mediates the acylation of lysophospholipids to produce phospholipids (glycerophospholipids). Highest activity with lysophosphatidylinositol (1-acyl-sn-glycero-3-phospho-(1D-myo-inositol) or LPI) producing phosphatidylinositol (1,2-diacyl-sn-glycero-3-phospho-(1D-myo-inositol) or PI) (LPIAT activity), but also converts lysophosphatidylcholine (1-acyl-sn-glycero-3-phosphocholine or LPC) to phosphatidylcholine (1,2-diacyl-sn-glycero-3-phosphocholine or PC) (LPCAT activity), lysophosphatidylserine (1-acyl-2-hydroxy-sn-glycero-3-phospho-L-serine or LPS) to phosphatidylserine (1,2-diacyl-sn-glycero-3-phospho-L-serine or PS) (LPSAT activity), and lysophosphatidylethanolamine (1-acyl-sn-glycero-3-phosphoethanolamine or LPE) producing phosphatidylethanolamine (1,2-diacyl-sn-glycero-3-phosphoethanolamine or PE) (LPEAT activity). Has a preference for unsaturated fatty acid arachidonoyl-CoA ((5Z,8Z,11Z,14Z)-eicosatetraenoyl-CoA). Glycerophospholipids are important structural and functional components of cellular membrane, acyl-chain remodeling regulates the molecular species distribution of glycerophospholipids which can affect membrane fluidity and curvature. This Drosophila melanogaster (Fruit fly) protein is Membrane-bound acylglycerophosphatidylinositol O-acyltransferase frj.